The chain runs to 1513 residues: Lid2 complex component lid2 (1513 aa).

A JmjN domain is found at 56–97; the sequence is GLSVQLNASNMTDPFKFLLDNWHTIFKNGAIKLLPPEGWQIP. The 92-residue stretch at 121–212 folds into the ARID domain; it reads YEKNYDYFKK…YIKPFERDSS (92 aa). The tract at residues 211-253 is disordered; sequence SSPSFKSKRSESSTRKIRNTRSSAQQESPIPETSAQSPVQTIQ. Positions 230-253 are enriched in polar residues; the sequence is TRSSAQQESPIPETSAQSPVQTIQ. Residues 268–318 form a PHD-type 1 zinc finger; that stretch reads GEQCEYCGLDKNPETILLCDGCEAAYHTSCLDPPLTSIPKEDWYCDACKFN. Residues 408-574 form the JmjC domain; it reads KYSSEPWNLH…DGLLNSSISV (167 aa). S722 carries the phosphoserine modification. The tract at residues 1063-1086 is disordered; it reads LSLNDRPGPPMEPASRETSPDSEG. Over residues 1076-1086 the composition is skewed to basic and acidic residues; sequence ASRETSPDSEG. A PHD-type 2 zinc finger spans residues 1093–1145; the sequence is KKGCIFCFCRLPESGVMIECEICHEWYHAKCLKMSKKKLRQDEKFTCPICDYR. An RING-type 1; degenerate zinc finger spans residues 1096–1143; that stretch reads CIFCFCRLPESGVMIECEICHEWYHAKCLKMSKKKLRQDEKFTCPICD. Disordered regions lie at residues 1244–1268 and 1280–1327; these read APNPPPIIGESKSTRKPRPTKRQRQ and ASAI…NNKN. Residues 1257–1268 show a composition bias toward basic residues; sequence TRKPRPTKRQRQ. The segment covering 1301–1313 has biased composition (basic and acidic residues); the sequence is VEAETKSKSEKSP. The span at 1316 to 1326 shows a compositional bias: polar residues; that stretch reads NGTNISDANNK. The PHD-type 3 zinc-finger motif lies at 1352–1403; that stretch reads NSSCLCGEEFSPRDSFIDCTICERRFHYDCVGLNNEIADSVSKFTCPICMEQ. The RING-type 2; degenerate zinc finger occupies 1354-1401; the sequence is SCLCGEEFSPRDSFIDCTICERRFHYDCVGLNNEIADSVSKFTCPICM.

As to quaternary structure, component of the Lid2 complex composed of ash2, jmj3, lid2, sdc1 and snt2.

It is found in the nucleus. This is Lid2 complex component lid2 (lid2) from Schizosaccharomyces pombe (strain 972 / ATCC 24843) (Fission yeast).